The chain runs to 1040 residues: DNA cross-link repair 1A protein (1040 aa).

The nuclear localization region stretch occupies residues 1–190 (MLEDISEEDI…RAGDHPFSSP (190 aa)). Residues 15–76 (SKRKPKRVDP…LGNAGCQTSV (62 aa)) are disordered. The span at 53–65 (RAAEAKEVKDHEV) shows a compositional bias: basic and acidic residues. A UBZ4-type zinc finger spans residues 119–149 (DGYCPNCQMPFSSLIGQTPRWHVFECLDSPP). Cys122, Cys125, His140, and Cys144 together coordinate Zn(2+). Residues Lys202, Lys236, Lys269, Lys353, Lys361, Lys429, Lys488, Lys508, Lys517, Lys533, and Lys536 each participate in a glycyl lysine isopeptide (Lys-Gly) (interchain with G-Cter in SUMO2) cross-link. The interval 396 to 614 (LPYDLACTGG…KSLSDLEFDA (219 aa)) is nuclear focus formation. Disordered stretches follow at residues 582-602 (GINL…CKRK) and 623-651 (SVEL…ACQK). At Ser590 the chain carries Phosphoserine. Glycyl lysine isopeptide (Lys-Gly) (interchain with G-Cter in SUMO2) cross-links involve residues Lys668, Lys670, and Lys674.

Belongs to the DNA repair metallo-beta-lactamase (DRMBL) family. As to quaternary structure, binds constitutively to TP53BP1. Binds CDC27, which is itself a component of the anaphase promoting complex (APC). Binds PIAS1. Expressed in brain, heart, kidney, liver, pancreas, placenta and skeletal muscle.

It localises to the nucleus. The enzyme catalyses a beta-lactam + H2O = a substituted beta-amino acid. Beta-lactamase activity is inhibited by sulbactam. In terms of biological role, may be required for DNA interstrand cross-link repair. Also required for checkpoint mediated cell cycle arrest in early prophase in response to mitotic spindle poisons. Possesses beta-lactamase activity, catalyzing the hydrolysis of penicillin G and nitrocefin. Exhibits no activity towards other beta-lactam antibiotic classes including cephalosporins (cefotaxime) and carbapenems (imipenem). This chain is DNA cross-link repair 1A protein (DCLRE1A), found in Homo sapiens (Human).